Here is a 672-residue protein sequence, read N- to C-terminus: Acetoacetyl-CoA synthetase (672 aa).

This sequence belongs to the ATP-dependent AMP-binding enzyme family.

It localises to the cytoplasm. The protein resides in the cytosol. It catalyses the reaction acetoacetate + ATP + CoA = acetoacetyl-CoA + AMP + diphosphate. In terms of biological role, activates acetoacetate to acetoacetyl-CoA. The protein is Acetoacetyl-CoA synthetase (aacs) of Xenopus tropicalis (Western clawed frog).